Reading from the N-terminus, the 1092-residue chain is Extended synaptotagmin-1 (1092 aa).

Methionine 1 bears the N-acetylmethionine mark. Residues 1–28 are Cytoplasmic-facing; the sequence is MEHSPEEGASPEPSGQPPATDSTRDGGS. Residues 1–36 are disordered; it reads MEHSPEEGASPEPSGQPPATDSTRDGGSGVPPAGPG. Residues 29-49 traverse the membrane as a helical segment; the sequence is GVPPAGPGAASEALAVLTSFG. Topologically, residues 50–52 are lumenal; sequence RRL. Residues 53 to 73 form a helical membrane-spanning segment; sequence LVLVPVYLAGAAGLSVGFVLF. Residues 74–1092 lie on the Cytoplasmic side of the membrane; it reads GLALYLGWRR…LMDDRDKGGS (1019 aa). The SMP-LTD domain occupies 125-303; sequence DVEKAEWLNK…LPNRLLVPLV (179 aa). C2 domains lie at 302 to 423, 444 to 570, 616 to 738, and 769 to 886; these read LVPD…DNWY, DAEK…QLSS, DAPP…DEWL, and QVNS…ALSG. Serine 314 is modified (phosphoserine; by CDK5). The Ca(2+) site is built by lysine 334, aspartate 335, aspartate 347, aspartate 394, aspartate 396, aspartate 398, aspartate 400, and aspartate 401. Residues 604 to 628 are disordered; that stretch reads WDRESLETGSSVDAPPRPYHTTPNS. Residue lysine 804 is modified to N6-acetyllysine. The residue at position 807 (serine 807) is a Phosphoserine. Residues 909-937 form a disordered region; the sequence is HSHSYSHSHSSSSLNDEPEALGGPTHPAS. Positions 911 to 921 are enriched in low complexity; the sequence is HSYSHSHSSSS. Serine 937 and serine 951 each carry phosphoserine. The C2 5 domain occupies 959-1081; sequence PLGQVKLTVW…DLSQGAAQWY (123 aa). Tyrosine 997 bears the Phosphotyrosine mark. Residues 1006–1013 are required for phosphatidylinositol 4,5-bisphosphate-dependent location at the cell membrane; it reads KNRSTKRK.

The protein belongs to the extended synaptotagmin family. In terms of assembly, interacts with ESYT2 and ESYT3. Interacts with ADGRD1; inhibiting the G-protein-coupled receptor activity of ADGRD1. Interaction with ADGRD1 is abolished when cytosolic calcium increases, relieving ADGRD1 G-protein-coupled receptor activity. Interacts (phosphorylated form) with SLC2A4. In terms of processing, phosphorylated on Ser residues in insulin-treated adipocytes (in vitro); this promotes interaction with SLC2A4.

The protein resides in the endoplasmic reticulum membrane. Its subcellular location is the cell membrane. Functionally, binds calcium (via the C2 domains) and translocates to sites of contact between the endoplasmic reticulum and the cell membrane in response to increased cytosolic calcium levels. Helps tether the endoplasmic reticulum to the cell membrane and promotes the formation of appositions between the endoplasmic reticulum and the cell membrane. Acts as an inhibitor of ADGRD1 G-protein-coupled receptor activity in absence of cytosolic calcium. Binds glycerophospholipids in a barrel-like domain and may play a role in cellular lipid transport. This Mus musculus (Mouse) protein is Extended synaptotagmin-1 (Esyt1).